Consider the following 626-residue polypeptide: Ankyrin repeat domain-containing protein 55 (626 aa).

9 ANK repeats span residues 25 to 54 (VDLA…SILE), 59 to 88 (EGCT…NINT), 92 to 124 (YGRT…IPDK), 125 to 156 (NGRL…EINH), 160 to 189 (EGMT…DPTL), 193 to 222 (DFKT…GPSI), 229 to 259 (SGKT…NLQA), 263 to 292 (DDRT…DSNL), and 296 to 325 (NEST…AEPA). Basic and acidic residues predominate over residues 354–372 (KEEQKAHQKDQSRARPKEE). Disordered regions lie at residues 354 to 377 (KEEQ…TSEV), 455 to 491 (HAGL…SLEN), and 522 to 626 (QPGH…HDEN). Ser-474 is modified (phosphoserine). The span at 604-614 (QRGHDPPRAEE) shows a compositional bias: basic and acidic residues. Positions 616 to 626 (GGSSSPTHDEN) are enriched in polar residues.

The chain is Ankyrin repeat domain-containing protein 55 (Ankrd55) from Mus musculus (Mouse).